Reading from the N-terminus, the 309-residue chain is Potassium channel subfamily K member 16 (309 aa).

Over 1–13 the chain is Cytoplasmic; that stretch reads MPSAGLCSCWGGR. Residues 14–34 traverse the membrane as a helical segment; the sequence is VLPLLLAYVCYLLLGATIFQL. The segment at residues 98–116 is an intramembrane region (pore-forming); it reads SFFFAGTVVTTIGYGNLAP. Residues threonine 108, isoleucine 109, glycine 110, and tyrosine 111 each contribute to the K(+) site. Positions 108–113 are selectivity filter 1; that stretch reads TIGYGN. Residues 120 to 140 traverse the membrane as a helical segment; it reads AGQVFCVFYALLGIPLNVIFL. Over 141–165 the chain is Cytoplasmic; that stretch reads NHLGTGLRAHLAAIERWEDRPRRSQ. The helical transmembrane segment at 166–186 threads the bilayer; the sequence is VLQVLGLALFLTLGTLVILIF. Positions 202 to 221 form an intramembrane region, pore-forming; it reads GFYFAFITLSTIGFGDYVVG. The K(+) site is built by threonine 212, isoleucine 213, glycine 214, and phenylalanine 215. Residues 212 to 217 are selectivity filter 2; it reads TIGFGD. The helical transmembrane segment at 238-258 threads the bilayer; it reads IWILLGLAWLALILPLGPLLL. Residues 259 to 309 lie on the Cytoplasmic side of the membrane; the sequence is HRCCQLWLLSLRQGCGAKAAPGRRPRRGSTAARGVQVTPQDFPISKKGLGS.

The protein belongs to the two pore domain potassium channel (TC 1.A.1.8) family. As to quaternary structure, homodimer; disulfide-linked. Heterodimer with KCNK17 and KCNK5. Highly expressed in pancreas, in both endocrine (alpha, beta, gamma, delta, and epsilon) and exocrine (acinar and ductal) cells. Expressed in pacreatic beta-cells (at protein level). Expressed in pacreatic delta-cells (at protein level). Not detectable in the other tissues tested.

The protein localises to the endoplasmic reticulum membrane. It localises to the cell membrane. The protein resides in the mitochondrion inner membrane. It carries out the reaction K(+)(in) = K(+)(out). It catalyses the reaction Rb(+)(in) = Rb(+)(out). The enzyme catalyses Cs(+)(in) = Cs(+)(out). With respect to regulation, the channel conductance is stimulated by extracellular alkaline pH. Inhibited by Ba(2+) ions, quinine, quinidine, chloroform and halothane. Functionally, k(+) channel that conducts voltage-dependent outward rectifying currents upon membrane depolarization. Voltage sensing is coupled to K(+) electrochemical gradient in an 'ion flux gating' mode where outward but not inward ion flow opens the gate. Homo- and heterodimerizes to form functional channels with distinct regulatory and gating properties. In pancreatic islets, conducts K(+) countercurrents for Ca(2+) release from the endoplasmic reticulum (ER) and regulates the frequency and duration of cytosolic Ca(2+) oscillations coupled to secretion of pancreatic hormones. In pancreatic beta cells, drives ER Ca(2+) efflux, which in turn activates Ca(2+)-dependent plasma membrane K(+) slow currents and cytosolic Ca(2+) influx, overall contributing to synchronous cytosolic Ca(2+) oscillations. Limits glucose-induced cytosolic Ca(2+) oscillations coupled to second-phase INS secretion. Contributes to beta cell adaptation to acute inflammation by maintaining normal cytosolic Ca(2+) levels and INS secretion. May regulate beta cell mitochondrial Ca(2+) levels either indirectly via ER Ca(2+) efflux or directly by hyperpolarizing the mitochondrial membrane potential. Limits mitochondrial Ca(2+) oscillations and ATP production involved in glucose homeostasis upon metabolic stress. In pancreatic delta cells, limits Ca(2+)-induced Ca(2+)-release involved in somatostatin secretion and modulates islet paracrine signaling involved in glucagon secretion. Permeable to other monovalent cations such as Rb(+) and Cs(+). The polypeptide is Potassium channel subfamily K member 16 (Homo sapiens (Human)).